The chain runs to 757 residues: Polyribonucleotide nucleotidyltransferase (757 aa).

Positions 531 and 537 each coordinate Mg(2+). The 60-residue stretch at 597–656 (PRVTTIRVPVDKIGEVIGPKGKIINAITEETGAQISIEDDGTVFVGATDGPSAQAAIDRI) folds into the KH domain. Positions 668–737 (GERFLGTVVK…KRGKISLVLV (70 aa)) constitute an S1 motif domain.

The protein belongs to the polyribonucleotide nucleotidyltransferase family. The cofactor is Mg(2+).

The protein resides in the cytoplasm. It carries out the reaction RNA(n+1) + phosphate = RNA(n) + a ribonucleoside 5'-diphosphate. Involved in mRNA degradation. Catalyzes the phosphorolysis of single-stranded polyribonucleotides processively in the 3'- to 5'-direction. This Mycolicibacterium paratuberculosis (strain ATCC BAA-968 / K-10) (Mycobacterium paratuberculosis) protein is Polyribonucleotide nucleotidyltransferase.